Consider the following 344-residue polypeptide: Photosystem II protein D1 (344 aa).

N-acetylthreonine is present on threonine 2. Phosphothreonine is present on threonine 2. The next 3 membrane-spanning stretches (helical) occupy residues 29 to 46, 118 to 133, and 142 to 156; these read YIGW…TATS, HFLL…EWEL, and WIAV…AATA. Chlorophyll a is bound at residue histidine 118. Tyrosine 126 contributes to the pheophytin a binding site. Positions 170 and 189 each coordinate [CaMn4O5] cluster. The chain crosses the membrane as a helical span at residues 197-218; that stretch reads FHMLGVAGVFGGSLFSAMHGSL. Chlorophyll a is bound at residue histidine 198. A quinone is bound by residues histidine 215 and 264–265; that span reads SF. Histidine 215 serves as a coordination point for Fe cation. Histidine 272 provides a ligand contact to Fe cation. Residues 274–288 traverse the membrane as a helical segment; sequence FLAAWPVVCIWFTAL. [CaMn4O5] cluster-binding residues include histidine 332, glutamate 333, aspartate 342, and alanine 344.

This sequence belongs to the reaction center PufL/M/PsbA/D family. As to quaternary structure, PSII is composed of 1 copy each of membrane proteins PsbA, PsbB, PsbC, PsbD, PsbE, PsbF, PsbH, PsbI, PsbJ, PsbK, PsbL, PsbM, PsbT, PsbX, PsbY, PsbZ, Psb30/Ycf12, at least 3 peripheral proteins of the oxygen-evolving complex and a large number of cofactors. It forms dimeric complexes. The D1/D2 heterodimer binds P680, chlorophylls that are the primary electron donor of PSII, and subsequent electron acceptors. It shares a non-heme iron and each subunit binds pheophytin, quinone, additional chlorophylls, carotenoids and lipids. D1 provides most of the ligands for the Mn4-Ca-O5 cluster of the oxygen-evolving complex (OEC). There is also a Cl(-1) ion associated with D1 and D2, which is required for oxygen evolution. The PSII complex binds additional chlorophylls, carotenoids and specific lipids. is required as a cofactor. In terms of processing, tyr-161 forms a radical intermediate that is referred to as redox-active TyrZ, YZ or Y-Z.

It localises to the plastid. Its subcellular location is the chloroplast thylakoid membrane. It catalyses the reaction 2 a plastoquinone + 4 hnu + 2 H2O = 2 a plastoquinol + O2. In terms of biological role, photosystem II (PSII) is a light-driven water:plastoquinone oxidoreductase that uses light energy to abstract electrons from H(2)O, generating O(2) and a proton gradient subsequently used for ATP formation. It consists of a core antenna complex that captures photons, and an electron transfer chain that converts photonic excitation into a charge separation. The D1/D2 (PsbA/PsbD) reaction center heterodimer binds P680, the primary electron donor of PSII as well as several subsequent electron acceptors. The protein is Photosystem II protein D1 of Staurastrum punctulatum (Green alga).